Consider the following 100-residue polypeptide: Small ribosomal subunit protein uS14c (100 aa).

It belongs to the universal ribosomal protein uS14 family. Component of the chloroplast small ribosomal subunit (SSU). Mature 70S chloroplast ribosomes of higher plants consist of a small (30S) and a large (50S) subunit. The 30S small subunit contains 1 molecule of ribosomal RNA (16S rRNA) and 24 different proteins. The 50S large subunit contains 3 rRNA molecules (23S, 5S and 4.5S rRNA) and 33 different proteins.

It is found in the plastid. The protein localises to the chloroplast. Component of the chloroplast ribosome (chloro-ribosome), a dedicated translation machinery responsible for the synthesis of chloroplast genome-encoded proteins, including proteins of the transcription and translation machinery and components of the photosynthetic apparatus. This is Small ribosomal subunit protein uS14c from Spinacia oleracea (Spinach).